Consider the following 200-residue polypeptide: Pyridoxal phosphate homeostasis protein (200 aa).

Lys11 bears the N6-(pyridoxal phosphate)lysine mark.

The protein belongs to the pyridoxal phosphate-binding protein YggS/PROSC family. In terms of assembly, monomer.

Its function is as follows. Pyridoxal 5'-phosphate (PLP)-binding protein, which is involved in PLP homeostasis. In Buchnera aphidicola subsp. Acyrthosiphon pisum (strain APS) (Acyrthosiphon pisum symbiotic bacterium), this protein is Pyridoxal phosphate homeostasis protein.